Consider the following 452-residue polypeptide: Scaffold protein ILK (452 aa).

Position 1 is an N-acetylmethionine (M1). 5 ANK repeats span residues 2–30 (DDIFTQCREGNAVAVRLWLDNTENDLNQG), 31–63 (DDHGFSPLHWACREGRSAVVEMLIMRGARINVM), 64–96 (NRGDDTPLHLAASHGHRDIVQKLLQYKADINAV), 97–129 (NEHGNVPLHYACFWGQDQVAEDLVANGALVSIC), and 130–174 (NKYG…GTTR). The interaction with LIMS1 stretch occupies residues 33-139 (HGFSPLHWAC…NKYGEMPVDK (107 aa)). A Phosphothreonine modification is found at T173. Positions 180-212 (GTLNKHSGIDFKQLNFLAKLNENHSGELWKGRW) are PH-like; mediates interaction with TGFB1I1. At S186 the chain carries Phosphoserine. The Protein kinase domain occupies 193-446 (LNFLAKLNEN…PKFDMIVPIL (254 aa)). ATP-binding residues include N200, N202, H203, and S204. Phosphoserine is present on S246. The ATP site is built by H270, M272, and N279. A Mg(2+)-binding site is contributed by D339. Residue K341 participates in ATP binding. Positions 363 to 371 (KKPEDTNRR) match the Nuclear localization signal motif. K426 bears the N6-acetyllysine mark.

This sequence belongs to the protein kinase superfamily. TKL Ser/Thr protein kinase family. Component of the heterotrimeric IPP (ILK-PINCH-PARVIN) complex composed of ILK, LIMS1/PINCH and PARVA; the complex binds to F-actin via the C-terminal tail of LIMS1 and the N-terminal region of PARVA, promoting F-actin filament bundling. Formation of the IPP complex is dependent on protein kinase C and precedes integrin-mediated cell adhesion and spreading. ILK also interacts with LIMS2/PINCH2 and with PARVB and PARVG which may substitute for LIMS1 and PARVA in the IPP complex; PARVA and PARVB compete for the same binding site. Interaction with PARVG promotes the establishment of cell polarity required for leukocyte migration. Interacts with the cytoplasmic domain of integrin ITGB1 and may also interact with integrins ITGB2, ITGB3 and/or ITGB5. Interacts probably also with TGFB1I1. Interacts (via ANK repeats) with EPHA1 (via SAM domain); stimulated by EFNA1 but independent of the kinase activity of EPHA1. Interacts with FERMT2. Interacts with LIMD2; leading to activate the protein kinase activity. Interacts with PXN/PAXILLIN (via LD motif 4). Interacts with CCDC25 (via cytoplasmic region); initiating the ILK-PARVB cascade to induce cytoskeleton rearrangement and directional migration of cells. Interacts with IQGAP1; the interaction is required for localization of IQGAP1 to the cell cortex. In terms of processing, phosphorylation by PAK1 modulates ILK subcellular location by promoting its nuclear export. As to expression, highly expressed in lung, heart, kidney, liver, brain, spleen and skeletal muscle. Weakly expressed in testis.

The protein localises to the cell junction. The protein resides in the focal adhesion. Its subcellular location is the cell membrane. It localises to the cytoplasm. It is found in the myofibril. The protein localises to the sarcomere. The protein resides in the cell projection. Its subcellular location is the lamellipodium. It localises to the nucleus. It is found in the cytoskeleton. The protein localises to the microtubule organizing center. The protein resides in the centrosome. Its subcellular location is the cell cortex. Functionally, scaffold protein which mediates protein-protein interactions during a range of cellular events including focal adhesion assembly, cell adhesion and cell migration. Regulates integrin-mediated signal transduction by contributing to inside-out integrin activation. Recruits PARVA and LIMS1/PITCH to form the heterotrimeric IPP (ILK-PINCH-PARVIN) complex which binds to F-actin via the C-terminal tail of LIMS1 and the N-terminal region of PARVA, promoting F-actin filament bundling, a process required to generate force for actin cytoskeleton reorganization and subsequent dynamic cell adhesion events such as cell spreading and migration. Binding to PARVA promotes effective assembly of ILK into focal adhesions while PARVA-bound ILK can simultaneously engage integrin-beta cytoplasmic tails to mediate cell adhesion. Plays a role with PARVG in promoting the cell adhesion and spreading of leukocytes. Acts as an upstream effector of both AKT1/PKB and GSK3. Mediates trafficking of caveolae to the cell surface in an ITGB1-dependent manner by promoting the recruitment of IQGAP1 to the cell cortex which cooperates with its effector DIAPH1 to locally stabilize microtubules and allow stable insertion of caveolae into the plasma membrane. Required for the maintenance of mitotic spindle integrity by promoting phosphorylation of TACC3 by AURKA. Associates with chromatin and may act as a negative regulator of transcription when located in the nucleus. This Mus musculus (Mouse) protein is Scaffold protein ILK.